The primary structure comprises 174 residues: Shikimate kinase 2 (174 aa).

12–17 is an ATP binding site; the sequence is GCGKTT. Residues T16 and D32 each contribute to the Mg(2+) site. The substrate site is built by D34, R58, and G79. The interval 112–126 is LID domain; the sequence is EAYPLADQRPTLTGR. R120 lines the ATP pocket. R139 serves as a coordination point for substrate. Residue Q155 participates in ATP binding.

It belongs to the shikimate kinase family. AroL subfamily. As to quaternary structure, monomer. Mg(2+) is required as a cofactor.

It localises to the cytoplasm. It carries out the reaction shikimate + ATP = 3-phosphoshikimate + ADP + H(+). Its pathway is metabolic intermediate biosynthesis; chorismate biosynthesis; chorismate from D-erythrose 4-phosphate and phosphoenolpyruvate: step 5/7. Functionally, catalyzes the specific phosphorylation of the 3-hydroxyl group of shikimic acid using ATP as a cosubstrate. This Erwinia tasmaniensis (strain DSM 17950 / CFBP 7177 / CIP 109463 / NCPPB 4357 / Et1/99) protein is Shikimate kinase 2.